Here is a 479-residue protein sequence, read N- to C-terminus: RAC-gamma serine/threonine-protein kinase (479 aa).

Position 2 is an N-acetylserine (serine 2). The PH domain occupies 5-107; it reads TIVKEGWVQK…WTEAIQAVAD (103 aa). Cysteine 59 and cysteine 76 are oxidised to a cystine. The 258-residue stretch at 148-405 folds into the Protein kinase domain; sequence FDYLKLLGKG…AKEIMRHSFF (258 aa). Residues 154 to 162 and lysine 177 contribute to the ATP site; that span reads LGKGTFGKV. Aspartate 271 acts as the Proton acceptor in catalysis. A disulfide bridge connects residues cysteine 293 and cysteine 307. The O-linked (GlcNAc) threonine glycan is linked to threonine 302. Threonine 305 carries the phosphothreonine; by PDPK1 modification. O-linked (GlcNAc) threonine glycosylation occurs at threonine 309. Positions 406–479 constitute an AGC-kinase C-terminal domain; it reads SGVNWQDVYD…QFSYSASGRE (74 aa). The interval 445-479 is disordered; the sequence is TITPPEKYDDDGMDGMDNERRPHFPQFSYSASGRE. Threonine 447 carries the post-translational modification Phosphothreonine. Serine 472 bears the Phosphoserine; by PKC/PRKCZ mark. Serine 472 is a glycosylation site (O-linked (GlcNAc) serine; alternate).

Belongs to the protein kinase superfamily. AGC Ser/Thr protein kinase family. RAC subfamily. Interacts (via PH domain) with TCL1A; this enhances AKT3 phosphorylation and activation. Interacts with TRAF6. Interacts with KCTD20. Interacts with BTBD10. Phosphorylation on Thr-305 and Ser-472 is required for full activity. Phosphorylation of the activation loop at Thr-305 by PDPK1/PDK1 is a prerequisite for full activation. Phosphorylation at Ser-472 by mTORC2 in response to growth factors plays a key role in AKT1 activation by facilitating subsequent phosphorylation of the activation loop by PDPK1/PDK1. Post-translationally, ubiquitinated. When fully phosphorylated and translocated into the nucleus, undergoes 'Lys-48'-polyubiquitination catalyzed by TTC3, leading to its degradation by the proteasome. In terms of processing, O-GlcNAcylation at Thr-302 and Thr-309 inhibits activating phosphorylation at Thr-305 via disrupting the interaction between AKT and PDPK1/PDK1. In terms of tissue distribution, isoform 1 is expressed in prostate, testis, uterus and mammary gland and isoform 2 is expressed in prostate, testis and mammary gland.

Its subcellular location is the nucleus. It is found in the cytoplasm. It localises to the membrane. The enzyme catalyses L-seryl-[protein] + ATP = O-phospho-L-seryl-[protein] + ADP + H(+). The catalysed reaction is L-threonyl-[protein] + ATP = O-phospho-L-threonyl-[protein] + ADP + H(+). Its activity is regulated as follows. Two specific sites, one in the kinase domain (Thr-305) and the other in the C-terminal regulatory region (Ser-472), need to be phosphorylated for its full activation. IGF-1 leads to the activation of AKT3, which may play a role in regulating cell survival. AKT3 is one of 3 closely related serine/threonine-protein kinases (AKT1, AKT2 and AKT3) called the AKT kinase, and which regulate many processes including metabolism, proliferation, cell survival, growth and angiogenesis. This is mediated through serine and/or threonine phosphorylation of a range of downstream substrates. Over 100 substrate candidates have been reported so far, but for most of them, no isoform specificity has been reported. AKT3 is the least studied AKT isoform. It plays an important role in brain development and is crucial for the viability of malignant glioma cells. AKT3 isoform may also be the key molecule in up-regulation and down-regulation of MMP13 via IL13. Required for the coordination of mitochondrial biogenesis with growth factor-induced increases in cellular energy demands. Down-regulation by RNA interference reduces the expression of the phosphorylated form of BAD, resulting in the induction of caspase-dependent apoptosis. The polypeptide is RAC-gamma serine/threonine-protein kinase (Akt3) (Mus musculus (Mouse)).